The chain runs to 655 residues: Very long-chain specific acyl-CoA dehydrogenase, mitochondrial (655 aa).

Residues 1–40 (MQAARIAPSLGRQLLRFGGGSSRPTALLGQPWPGPARRPY) constitute a mitochondrion transit peptide. The catalytic stretch occupies residues 41–482 (AGGAAQLALD…ALQGCMDKGK (442 aa)). K51 is modified (N6-acetyllysine). An N6-acetyllysine; alternate modification is found at K71. N6-succinyllysine; alternate is present on K71. K195 carries the N6-succinyllysine modification. 214 to 223 (FCLTEPSSGS) contacts FAD. C237 carries the S-nitrosocysteine modification. An N6-acetyllysine; alternate modification is found at K239. N6-succinyllysine; alternate is present on K239. 249–251 (WIS) contributes to the FAD binding site. N6-acetyllysine; alternate is present on residues K276 and K278. 2 positions are modified to N6-succinyllysine; alternate: K276 and K278. Residue K298 is modified to N6-acetyllysine. Residue K331 is modified to N6-acetyllysine; alternate. The residue at position 331 (K331) is an N6-succinyllysine; alternate. K372 is modified (N6-succinyllysine). 461–463 (FEG) serves as a coordination point for substrate. The active-site Proton acceptor is E462. 464–466 (TND) lines the FAD pocket. Residue K482 is modified to N6-acetyllysine; alternate. N6-succinyllysine; alternate is present on K482. Positions 483 to 516 (ELSGLGSALKNPFGNAGLLLGEAGKQLRRRAGLG) are membrane-anchoring. Residues S517 and S522 each carry the phosphoserine modification. N6-acetyllysine is present on K550. At K556 the chain carries N6-acetyllysine; alternate. K556 bears the N6-succinyllysine; alternate mark. Q562 serves as a coordination point for FAD. An N6-succinyllysine modification is found at K639.

The protein belongs to the acyl-CoA dehydrogenase family. As to quaternary structure, homodimer. Homodimerizes after import into the mitochondrion. FAD is required as a cofactor. S-nitrosylation at Cys-237 in liver improves catalytic efficiency.

It localises to the mitochondrion inner membrane. The enzyme catalyses a very-long-chain 2,3-saturated fatty acyl-CoA + oxidized [electron-transfer flavoprotein] + H(+) = a very-long-chain (2E)-enoyl-CoA + reduced [electron-transfer flavoprotein]. It catalyses the reaction dodecanoyl-CoA + oxidized [electron-transfer flavoprotein] + H(+) = (2E)-dodecenoyl-CoA + reduced [electron-transfer flavoprotein]. The catalysed reaction is tetradecanoyl-CoA + oxidized [electron-transfer flavoprotein] + H(+) = (2E)-tetradecenoyl-CoA + reduced [electron-transfer flavoprotein]. It carries out the reaction oxidized [electron-transfer flavoprotein] + hexadecanoyl-CoA + H(+) = (2E)-hexadecenoyl-CoA + reduced [electron-transfer flavoprotein]. The enzyme catalyses octadecanoyl-CoA + oxidized [electron-transfer flavoprotein] + H(+) = (2E)-octadecenoyl-CoA + reduced [electron-transfer flavoprotein]. It catalyses the reaction eicosanoyl-CoA + oxidized [electron-transfer flavoprotein] + H(+) = (2E)-eicosenoyl-CoA + reduced [electron-transfer flavoprotein]. The catalysed reaction is docosanoyl-CoA + oxidized [electron-transfer flavoprotein] + H(+) = (2E)-docosenoyl-CoA + reduced [electron-transfer flavoprotein]. It carries out the reaction tetracosanoyl-CoA + oxidized [electron-transfer flavoprotein] + H(+) = (2E)-tetracosenoyl-CoA + reduced [electron-transfer flavoprotein]. Its pathway is lipid metabolism; mitochondrial fatty acid beta-oxidation. Its function is as follows. Very long-chain specific acyl-CoA dehydrogenase is one of the acyl-CoA dehydrogenases that catalyze the first step of mitochondrial fatty acid beta-oxidation, an aerobic process breaking down fatty acids into acetyl-CoA and allowing the production of energy from fats. The first step of fatty acid beta-oxidation consists in the removal of one hydrogen from C-2 and C-3 of the straight-chain fatty acyl-CoA thioester, resulting in the formation of trans-2-enoyl-CoA. Among the different mitochondrial acyl-CoA dehydrogenases, very long-chain specific acyl-CoA dehydrogenase acts specifically on acyl-CoAs with saturated 12 to 24 carbons long primary chains. The chain is Very long-chain specific acyl-CoA dehydrogenase, mitochondrial from Macaca fascicularis (Crab-eating macaque).